The sequence spans 604 residues: Aspartate--tRNA(Asp/Asn) ligase (604 aa).

Glu-175 is an L-aspartate binding site. The segment at 199–202 (QMFK) is aspartate. L-aspartate-binding residues include Arg-221 and His-451. Position 221–223 (221–223 (RDE)) interacts with ATP. Glu-485 is an ATP binding site. Position 492 (Arg-492) interacts with L-aspartate. 537 to 540 (GIDR) serves as a coordination point for ATP.

It belongs to the class-II aminoacyl-tRNA synthetase family. Type 1 subfamily. As to quaternary structure, homodimer.

Its subcellular location is the cytoplasm. The catalysed reaction is tRNA(Asx) + L-aspartate + ATP = L-aspartyl-tRNA(Asx) + AMP + diphosphate. Functionally, aspartyl-tRNA synthetase with relaxed tRNA specificity since it is able to aspartylate not only its cognate tRNA(Asp) but also tRNA(Asn). Reaction proceeds in two steps: L-aspartate is first activated by ATP to form Asp-AMP and then transferred to the acceptor end of tRNA(Asp/Asn). In Erythrobacter litoralis (strain HTCC2594), this protein is Aspartate--tRNA(Asp/Asn) ligase.